Here is a 128-residue protein sequence, read N- to C-terminus: Spore germination protein 1/2/3-related protein (128 aa).

Residues methionine 1–alanine 26 form the signal peptide. Residues asparagine 55 and asparagine 119 are each glycosylated (N-linked (GlcNAc...) asparagine).

This sequence belongs to the Dictyostelium gerABC family.

It is found in the secreted. The polypeptide is Spore germination protein 1/2/3-related protein (Dictyostelium discoideum (Social amoeba)).